Consider the following 146-residue polypeptide: Large ribosomal subunit protein uL15 (146 aa).

A disordered region spans residues 1–54 (MTLRLNELAPAEGAKREHRRLGRGIGSGVGKTGGRGIKGQKSRKSGGVRPGFEG). Over residues 23–37 (RGIGSGVGKTGGRGI) the composition is skewed to gly residues.

The protein belongs to the universal ribosomal protein uL15 family. Part of the 50S ribosomal subunit.

Functionally, binds to the 23S rRNA. This chain is Large ribosomal subunit protein uL15, found in Acinetobacter baumannii (strain SDF).